The sequence spans 523 residues: GMP synthase [glutamine-hydrolyzing] (523 aa).

The 198-residue stretch at 8–205 folds into the Glutamine amidotransferase type-1 domain; the sequence is RILILDFGSQ…IRELCECEAL (198 aa). Cysteine 85 acts as the Nucleophile in catalysis. Catalysis depends on residues histidine 179 and glutamate 181. The GMPS ATP-PPase domain maps to 206 to 398; that stretch reads WTPSNIISDA…LGLPYDMVYR (193 aa). Residue 233–239 coordinates ATP; it reads SGGVDSS.

As to quaternary structure, homodimer.

The catalysed reaction is XMP + L-glutamine + ATP + H2O = GMP + L-glutamate + AMP + diphosphate + 2 H(+). The protein operates within purine metabolism; GMP biosynthesis; GMP from XMP (L-Gln route): step 1/1. Its function is as follows. Catalyzes the synthesis of GMP from XMP. The polypeptide is GMP synthase [glutamine-hydrolyzing] (Alcanivorax borkumensis (strain ATCC 700651 / DSM 11573 / NCIMB 13689 / SK2)).